Consider the following 23-residue polypeptide: Thylakoid lumenal 17.4 kDa protein (23 aa).

A disordered region spans residues 1 to 23 (ANQRLPPLSNDPDRCERAFVGNT).

It is found in the plastid. The protein resides in the chloroplast thylakoid lumen. This Spinacia oleracea (Spinach) protein is Thylakoid lumenal 17.4 kDa protein.